The chain runs to 358 residues: Snurportin-1 (358 aa).

N-acetylmethionine is present on Met1. Disordered regions lie at residues 1-26 and 69-90; these read MEEL…APHP and DWTG…MDID. Residues 1–65 form a necessary for interaction with KPNB1 and m3G-cap U1 and U5 snRNP import receptor activity region; the sequence is MEELSQALAS…LDYVNHARRL (65 aa). Residues 1 to 160 are necessary for interaction with XPO1; that stretch reads MEELSQALAS…NRFSSLLPGG (160 aa). The span at 7–22 shows a compositional bias: polar residues; it reads ALASSFSVSQELNSTA. The IBB domain maps to 11–73; sequence SFSVSQELNS…RLAEDDWTGM (63 aa). Ser75 carries the phosphoserine modification. The tract at residues 128–130 is interaction with m3G-cap structure; it reads GKR. Residues 210-329 form a necessary for binding to the m3G-cap structure region; it reads MHSKLPEEEG…DTKEKLTHKA (120 aa). Over residues 315 to 341 the composition is skewed to basic and acidic residues; it reads KRSQEDTKEKLTHKASENGHYELEHLS. The disordered stretch occupies residues 315–358; it reads KRSQEDTKEKLTHKASENGHYELEHLSTPKLRNPPHSSESLMDN. The span at 349 to 358 shows a compositional bias: polar residues; sequence PHSSESLMDN. Ser351 is modified (phosphoserine).

It belongs to the snurportin family. As to quaternary structure, component of an import snRNP complex composed of KPNB1, SNUPN, SMN1 and ZNF259. Component of a nuclear export receptor complex composed of KPNB1, Ran, SNUPN and XPO1. Found in a trimeric export complex with SNUPN, Ran and XPO1. Interacts (via IBB domain) with KPNB1; the interaction is direct. Interacts with DDX20, IPO7, SMN1, SNRPB and XPO1. Interacts directly with XPO1. Its interaction with XPO1 and binding to m3G-cap U snRNPs appears to be mutually exclusive. Can form homomers.

It localises to the nucleus. Its subcellular location is the cytoplasm. In terms of biological role, functions as an U snRNP-specific nuclear import adapter. Involved in the trimethylguanosine (m3G)-cap-dependent nuclear import of U snRNPs. Binds specifically to the terminal m3G-cap U snRNAs. In Mus musculus (Mouse), this protein is Snurportin-1 (Snupn).